A 132-amino-acid polypeptide reads, in one-letter code: Small ribosomal subunit protein uS19 (132 aa).

This sequence belongs to the universal ribosomal protein uS19 family.

Functionally, protein S19 forms a complex with S13 that binds strongly to the 16S ribosomal RNA. The chain is Small ribosomal subunit protein uS19 (rps19) from Pyrococcus abyssi (strain GE5 / Orsay).